A 57-amino-acid polypeptide reads, in one-letter code: Ribosome modulation factor (57 aa).

The interval 1–28 is disordered; that stretch reads MKRQKRDRLERAQSQGYKAGLNGRSHDE.

The protein belongs to the ribosome modulation factor family.

Its subcellular location is the cytoplasm. Functionally, during stationary phase, converts 70S ribosomes to an inactive dimeric form (100S ribosomes). The chain is Ribosome modulation factor from Vibrio cholerae serotype O1 (strain MJ-1236).